Consider the following 423-residue polypeptide: NADP-specific glutamate dehydrogenase (423 aa).

Residue lysine 112 is part of the active site.

The protein belongs to the Glu/Leu/Phe/Val dehydrogenases family. Homohexamer.

The catalysed reaction is L-glutamate + NADP(+) + H2O = 2-oxoglutarate + NH4(+) + NADPH + H(+). The chain is NADP-specific glutamate dehydrogenase (gdhA) from Saccharolobus shibatae (strain ATCC 51178 / DSM 5389 / JCM 8931 / NBRC 15437 / B12) (Sulfolobus shibatae).